The following is a 347-amino-acid chain: Merozoite surface protein P12 (347 aa).

Positions 1 to 23 (MIKLSKKYCLGISFVLYILLSVC) form a signal peptide, or 25. 6-Cys domains lie at 27 to 172 (KNLT…IPSL) and 175 to 305 (KVKG…ISSS). The N-linked (GlcNAc...) asparagine glycan is linked to asparagine 28. 3 disulfide bridges follow: cysteine 31–cysteine 53, cysteine 67–cysteine 138, and cysteine 81–cysteine 136. 6 N-linked (GlcNAc...) asparagine glycosylation sites follow: asparagine 147, asparagine 200, asparagine 228, asparagine 242, asparagine 265, and asparagine 322. Disulfide bonds link cysteine 179/cysteine 211, cysteine 225/cysteine 286, and cysteine 236/cysteine 284. The GPI-anchor amidated asparagine moiety is linked to residue asparagine 322. Positions 323 to 347 (SSFLTLSSYCAFITFIITSFLSFIL) are cleaved as a propeptide — removed in mature form.

Heterodimer; heterodimerizes with PF41. May form an antiparallel heterodimer with PF41.

Its subcellular location is the cell surface. The protein localises to the cell membrane. In Plasmodium falciparum, this protein is Merozoite surface protein P12 (PF12).